Here is a 77-residue protein sequence, read N- to C-terminus: Large ribosomal subunit protein uL24 (77 aa).

The protein belongs to the universal ribosomal protein uL24 family. In terms of assembly, part of the 50S ribosomal subunit.

One of two assembly initiator proteins, it binds directly to the 5'-end of the 23S rRNA, where it nucleates assembly of the 50S subunit. Its function is as follows. One of the proteins that surrounds the polypeptide exit tunnel on the outside of the subunit. This Campylobacter jejuni subsp. doylei (strain ATCC BAA-1458 / RM4099 / 269.97) protein is Large ribosomal subunit protein uL24.